Here is a 32-residue protein sequence, read N- to C-terminus: Cytochrome b6-f complex subunit 7 (32 aa).

Residues 5–25 form a helical membrane-spanning segment; sequence IFGTAAIFWVLIPIGLVGGAL.

Belongs to the PetM family. As to quaternary structure, the 4 large subunits of the cytochrome b6-f complex are cytochrome b6, subunit IV (17 kDa polypeptide, PetD), cytochrome f and the Rieske protein, while the 4 small subunits are PetG, PetL, PetM and PetN. The complex functions as a dimer.

The protein localises to the cellular thylakoid membrane. Its function is as follows. Component of the cytochrome b6-f complex, which mediates electron transfer between photosystem II (PSII) and photosystem I (PSI), cyclic electron flow around PSI, and state transitions. In Synechococcus sp. (strain CC9902), this protein is Cytochrome b6-f complex subunit 7.